Reading from the N-terminus, the 505-residue chain is Histidine--tRNA ligase, mitochondrial (505 aa).

The transit peptide at 1–31 (MPHLGPLRRRAWAALLGQLLRPPSTVCTRGC) directs the protein to the mitochondrion. S66 bears the Phosphoserine mark. L-histidine-binding positions include 130–132 (DLT), R157, Q173, D177, R326, and 330–331 (YY). Residue K443 is modified to N6-acetyllysine.

It belongs to the class-II aminoacyl-tRNA synthetase family. In terms of assembly, homodimer.

The protein resides in the mitochondrion. It catalyses the reaction tRNA(His) + L-histidine + ATP = L-histidyl-tRNA(His) + AMP + diphosphate + H(+). Its function is as follows. Mitochondrial aminoacyl-tRNA synthetase that catalyzes the ATP-dependent ligation of histidine to the 3'-end of its cognate tRNA, via the formation of an aminoacyl-adenylate intermediate (His-AMP). The sequence is that of Histidine--tRNA ligase, mitochondrial (Hars2) from Mus musculus (Mouse).